Reading from the N-terminus, the 417-residue chain is MDALLIQGGNPLAGEVRISGAKNAALPILTASLLTAEPLRLGNVPHLKDISTMLALLGHMGVRVTLDDKNHVTLSGDSIPHKEAPYEMVKTMRAAILVLGPTLARFGEARVSLPGGCAIGSRPVDLHIKGLQAMGADISIEHGYIHARCKRLQGARIVMDMVTVTGTENLMMAAALAEGTTVLENAAREPEVVDLARCLIAMGAKIEGAGTDVITVHGVEALHGAEYSVMADRIETGTFLVAAAMTGGRVRATHTSPDTLEAVISKLREAGAKVSVGDDWIEVESTGKLDSVDVRTAPHPAFPTDMQAQFMAMNTIAVGAASVTETIFENRFMHVQELRRLGANIEVSGHTALVRGVARLDGATVMATDLRASACLVLAGLVAAGETTIERIYHLDRGYERIEEKLTQLGGRIKRVH.

A phosphoenolpyruvate-binding site is contributed by 22–23 (KN). R93 is a binding site for UDP-N-acetyl-alpha-D-glucosamine. Residue C117 is the Proton donor of the active site. C117 bears the 2-(S-cysteinyl)pyruvic acid O-phosphothioketal mark. Residues 122–126 (RPVDL), D305, and I327 contribute to the UDP-N-acetyl-alpha-D-glucosamine site.

The protein belongs to the EPSP synthase family. MurA subfamily.

The protein resides in the cytoplasm. The catalysed reaction is phosphoenolpyruvate + UDP-N-acetyl-alpha-D-glucosamine = UDP-N-acetyl-3-O-(1-carboxyvinyl)-alpha-D-glucosamine + phosphate. It participates in cell wall biogenesis; peptidoglycan biosynthesis. Cell wall formation. Adds enolpyruvyl to UDP-N-acetylglucosamine. The sequence is that of UDP-N-acetylglucosamine 1-carboxyvinyltransferase from Thiobacillus denitrificans (strain ATCC 25259 / T1).